A 321-amino-acid polypeptide reads, in one-letter code: Lipoyl synthase (321 aa).

Cysteine 68, cysteine 73, cysteine 79, cysteine 94, cysteine 98, cysteine 101, and serine 308 together coordinate [4Fe-4S] cluster. A Radical SAM core domain is found at phenylalanine 80–threonine 297.

Belongs to the radical SAM superfamily. Lipoyl synthase family. [4Fe-4S] cluster serves as cofactor.

The protein localises to the cytoplasm. It catalyses the reaction [[Fe-S] cluster scaffold protein carrying a second [4Fe-4S](2+) cluster] + N(6)-octanoyl-L-lysyl-[protein] + 2 oxidized [2Fe-2S]-[ferredoxin] + 2 S-adenosyl-L-methionine + 4 H(+) = [[Fe-S] cluster scaffold protein] + N(6)-[(R)-dihydrolipoyl]-L-lysyl-[protein] + 4 Fe(3+) + 2 hydrogen sulfide + 2 5'-deoxyadenosine + 2 L-methionine + 2 reduced [2Fe-2S]-[ferredoxin]. It participates in protein modification; protein lipoylation via endogenous pathway; protein N(6)-(lipoyl)lysine from octanoyl-[acyl-carrier-protein]: step 2/2. Functionally, catalyzes the radical-mediated insertion of two sulfur atoms into the C-6 and C-8 positions of the octanoyl moiety bound to the lipoyl domains of lipoate-dependent enzymes, thereby converting the octanoylated domains into lipoylated derivatives. This chain is Lipoyl synthase, found in Pectobacterium carotovorum subsp. carotovorum (strain PC1).